A 585-amino-acid polypeptide reads, in one-letter code: Staphyloferrin A synthase (585 aa).

It belongs to the IucA/IucC family.

It catalyses the reaction N(5)-[(S)-citryl]-D-ornithine + citrate + ATP = staphyloferrin A + AMP + diphosphate + H(+). It functions in the pathway siderophore biosynthesis. Functionally, involved in the biosynthesis of the siderophore staphyloferrin A. Catalyzes the ATP-dependent condensation of a citryl-D-ornithine intermediate, produced by SfnaD, and citrate to form staphyloferrin A. The chain is Staphyloferrin A synthase from Staphylococcus aureus (strain NCTC 8325 / PS 47).